The chain runs to 282 residues: Tetraspanin-6 (282 aa).

Over 1–7 the chain is Cytoplasmic; the sequence is MYRFSNT. A helical transmembrane segment spans residues 8–28; it reads VIGVLNLLTLLASIPIIGTAL. Residues 29–44 are Extracellular-facing; sequence YKARSSTTCENFLQTP. The chain crosses the membrane as a helical span at residues 45–65; sequence LLVIGFIILIVSLAGFIGACF. At 66 to 74 the chain is on the cytoplasmic side; it reads NVAWALWVY. Residues 75 to 95 traverse the membrane as a helical segment; sequence LVVMIFLIATLMGLTLFGLVV. Topologically, residues 96 to 220 are extracellular; that stretch reads TSQGGGVEVP…EIRLDWRKLS (125 aa). A helical transmembrane segment spans residues 221–241; sequence VVNILVLVLLIAVYAAGCCAF. The Cytoplasmic portion of the chain corresponds to 242–282; that stretch reads HNTRHAAHPYHPSDDNRMTRVRPRWDYYWWRWWHEKKEQLY.

The protein belongs to the tetraspanin (TM4SF) family.

The protein localises to the membrane. Functionally, may be involved in the regulation of cell differentiation. The polypeptide is Tetraspanin-6 (TET6) (Arabidopsis thaliana (Mouse-ear cress)).